We begin with the raw amino-acid sequence, 736 residues long: Phosphoribosylformylglycinamidine synthase subunit PurL (736 aa).

His49 is a catalytic residue. ATP is bound by residues Tyr52 and Lys91. Glu93 lines the Mg(2+) pocket. Residues 94–97 (SHNH) and Arg116 each bind substrate. His95 functions as the Proton acceptor in the catalytic mechanism. Residue Asp117 coordinates Mg(2+). Residue Gln240 coordinates substrate. Residue Asp268 participates in Mg(2+) binding. Residue 312–314 (ESQ) coordinates substrate. ATP-binding residues include Asp493 and Gly530. Residue Asn531 coordinates Mg(2+). Ser533 provides a ligand contact to substrate.

It belongs to the FGAMS family. Monomer. Part of the FGAM synthase complex composed of 1 PurL, 1 PurQ and 2 PurS subunits.

The protein localises to the cytoplasm. It catalyses the reaction N(2)-formyl-N(1)-(5-phospho-beta-D-ribosyl)glycinamide + L-glutamine + ATP + H2O = 2-formamido-N(1)-(5-O-phospho-beta-D-ribosyl)acetamidine + L-glutamate + ADP + phosphate + H(+). Its pathway is purine metabolism; IMP biosynthesis via de novo pathway; 5-amino-1-(5-phospho-D-ribosyl)imidazole from N(2)-formyl-N(1)-(5-phospho-D-ribosyl)glycinamide: step 1/2. Part of the phosphoribosylformylglycinamidine synthase complex involved in the purines biosynthetic pathway. Catalyzes the ATP-dependent conversion of formylglycinamide ribonucleotide (FGAR) and glutamine to yield formylglycinamidine ribonucleotide (FGAM) and glutamate. The FGAM synthase complex is composed of three subunits. PurQ produces an ammonia molecule by converting glutamine to glutamate. PurL transfers the ammonia molecule to FGAR to form FGAM in an ATP-dependent manner. PurS interacts with PurQ and PurL and is thought to assist in the transfer of the ammonia molecule from PurQ to PurL. This is Phosphoribosylformylglycinamidine synthase subunit PurL from Rhodopseudomonas palustris (strain TIE-1).